The chain runs to 120 residues: MVDIVKRRDWEKKEKKKIAIERIDTLFTLAERVARYSPDLAKRYVELALEIQKKAKVKIPRKWKRRYCKRCHTFLIPGVNARVRLRTKRMPHVVITCLECGYIMRYPYLREVKQKRKKAT.

The Zn(2+) site is built by Cys-68, Cys-71, Cys-97, and Cys-100.

It belongs to the eukaryotic/archaeal RNase P protein component 4 family. As to quaternary structure, consists of a catalytic RNA component and at least 5 protein subunits. Forms a heterodimeric subcomplex with Rnp1. Reconstituted enzyme missing individual protein subunits is suboptimally active, showing each subunit contributes to optimization of activity. Zn(2+) is required as a cofactor.

The protein resides in the cytoplasm. It catalyses the reaction Endonucleolytic cleavage of RNA, removing 5'-extranucleotides from tRNA precursor.. In terms of biological role, part of ribonuclease P, a protein complex that generates mature tRNA molecules by cleaving their 5'-ends. Binds RNase P RNA. This Pyrococcus horikoshii (strain ATCC 700860 / DSM 12428 / JCM 9974 / NBRC 100139 / OT-3) protein is Ribonuclease P protein component 4.